A 273-amino-acid chain; its full sequence is Citrate lyase subunit beta-like protein (273 aa).

Substrate contacts are provided by Arg-64 and Glu-112. 2 residues coordinate Mg(2+): Glu-112 and Asp-138.

The protein belongs to the HpcH/HpaI aldolase family. Citrate lyase beta subunit-like subfamily. Homotrimer. Requires Mg(2+) as cofactor.

Its function is as follows. May play a role in fatty acid biosynthesis. The polypeptide is Citrate lyase subunit beta-like protein (citE) (Mycobacterium tuberculosis (strain CDC 1551 / Oshkosh)).